A 332-amino-acid polypeptide reads, in one-letter code: tRNA (cytosine(38)-C(5))-methyltransferase (332 aa).

In terms of domain architecture, SAM-dependent MTase C5-type spans 3 to 332 (HKILELYSGI…ISELLKILFE (330 aa)). Residues 12-14 (IGG), 33-34 (DI), 55-56 (NI), and Ser-75 each bind S-adenosyl-L-homocysteine. Residue Cys-78 is part of the active site. S-adenosyl-L-homocysteine contacts are provided by residues Gln-79, Ser-97, and 316 to 317 (NS).

It belongs to the class I-like SAM-binding methyltransferase superfamily. C5-methyltransferase family.

It is found in the cytoplasm. It localises to the nucleus. It carries out the reaction cytidine(38) in tRNA + S-adenosyl-L-methionine = 5-methylcytidine(38) in tRNA + S-adenosyl-L-homocysteine + H(+). The enzyme catalyses a 2'-deoxycytidine in DNA + S-adenosyl-L-methionine = a 5-methyl-2'-deoxycytidine in DNA + S-adenosyl-L-homocysteine + H(+). Functionally, specifically methylates cytosine 38 in the anticodon loop of tRNA(Asp). Also has DNA (cytosine-5)-methyltransferase activity. Shows affinity for both tRNA(Asp) and DNA substrates. This Spodoptera frugiperda (Fall armyworm) protein is tRNA (cytosine(38)-C(5))-methyltransferase.